A 31-amino-acid polypeptide reads, in one-letter code: GCVGHRKSCEHDKKNGCCYFMTCNCWHPMGQ.

Cystine bridges form between C2–C18 and C9–C23.

In terms of tissue distribution, expressed by the venom gland.

It is found in the secreted. In terms of biological role, antagonist of L-type calcium channels (Cav1/CACNA1). The chain is U6-ctenitoxin-Co1a from Ctenus ornatus (Brazilian spider).